The sequence spans 131 residues: Methylglyoxal synthase (131 aa).

In terms of domain architecture, MGS-like spans 1 to 131 (MKIALIAHDK…GDLDYRKLRK (131 aa)). Substrate-binding positions include His8, Lys12, 34–37 (TGTT), and 54–55 (SG). The active-site Proton donor/acceptor is the Asp60. Substrate is bound at residue His87.

This sequence belongs to the methylglyoxal synthase family.

It carries out the reaction dihydroxyacetone phosphate = methylglyoxal + phosphate. Functionally, catalyzes the formation of methylglyoxal from dihydroxyacetone phosphate. This is Methylglyoxal synthase from Bacillus cereus (strain ATCC 14579 / DSM 31 / CCUG 7414 / JCM 2152 / NBRC 15305 / NCIMB 9373 / NCTC 2599 / NRRL B-3711).